The following is a 339-amino-acid chain: STEAP1 protein (339 aa).

Transmembrane regions (helical) follow at residues tryptophan 71–leucine 91 and proline 119–valine 139. The region spanning leucine 118–glycine 265 is the Ferric oxidoreductase domain. FAD is bound by residues glutamine 140 and arginine 161. 2 helical membrane-spanning segments follow: residues phenylalanine 164–methionine 184 and isoleucine 218–isoleucine 238. Histidine 175 contacts heme b. FAD contacts are provided by serine 237 and glutamine 254. Transmembrane regions (helical) follow at residues glycine 258–isoleucine 278 and phenylalanine 291–proline 311. A heme b-binding site is contributed by histidine 268.

It belongs to the STEAP family. As to quaternary structure, homotrimer. The cofactor is FAD. Heme b is required as a cofactor. As to expression, ubiquitously expressed. Highly expressed in prostate tumors.

It is found in the endosome membrane. The protein localises to the cell membrane. In terms of biological role, does not function as a metalloreductase due to the absence of binding sites for the electron-donating substrate NADPH. Promotes Fe(3+) reduction when fused to the NADPH-binding domain of STEAP4. The polypeptide is STEAP1 protein (STEAP1) (Homo sapiens (Human)).